Consider the following 116-residue polypeptide: MSTVELLKHIYDINLSYLLLAQRLINQEKASAMFRLGISDSMADALKELTLPQLVKLAETNQLICNFRFEDSETIEQLTKESRVDDLQQIHTGILLSSNLFRQLSEHDTSATKKRA.

It belongs to the FlhD family. As to quaternary structure, homodimer; disulfide-linked. Forms a heterohexamer composed of two FlhC and four FlhD subunits. Each FlhC binds a FlhD dimer, forming a heterotrimer, and a hexamer assembles by dimerization of two heterotrimers.

It is found in the cytoplasm. Functionally, functions in complex with FlhC as a master transcriptional regulator that regulates transcription of several flagellar and non-flagellar operons by binding to their promoter region. Activates expression of class 2 flagellar genes, including fliA, which is a flagellum-specific sigma factor that turns on the class 3 genes. Also regulates genes whose products function in a variety of physiological pathways. The sequence is that of Flagellar transcriptional regulator FlhD from Proteus mirabilis (strain HI4320).